The primary structure comprises 512 residues: MTALTLTPGSATLEHLARIYFDESPVRLDPACRPAVEAAAARIRAAAAGDVPVYGVNTGFGKLASLKVAPQDTATLQRNLILSHCCGVGAPIPRRMARLMMVLKLLSLGRGASGVRWELITLLQEMLARDVTPVIPVQGSVGASGDLAPLAHMTAVIIGAGEAEYQGQRLPGAEALARAGLTPIALGPKEGLAFINGTQFSTAFALAGLFGAWRAATSSLVTAALSTDAIMGSTAPLQPEIHALRGHRGQIDAAARMRALLDGSEIRESHREGDTRVQDPYCIRCQPQVTGAAMDVLRQAAQTLEIEANAATDNPLVLAEADMIVSGGNFHAEPVGFAADLIALALSEIGAIAQRRVALMVDPTLSFDLPPFLTPKPGLNSGLMIAEVTTAALMSENKHLANPCVTDSTPTSANQEDHVSMAAHGAVRLGRMVENLHYILGVELLCAAQGIEFRAPLQTSTALQAAVARLRAEVPRLEEDRYMAPEIETAARLVGAGALLDVVGIDMGGLRP.

Positions Ala143–Gly145 form a cross-link, 5-imidazolinone (Ala-Gly). Ser144 is modified (2,3-didehydroalanine (Ser)).

This sequence belongs to the PAL/histidase family. Post-translationally, contains an active site 4-methylidene-imidazol-5-one (MIO), which is formed autocatalytically by cyclization and dehydration of residues Ala-Ser-Gly.

The protein resides in the cytoplasm. It carries out the reaction L-histidine = trans-urocanate + NH4(+). Its pathway is amino-acid degradation; L-histidine degradation into L-glutamate; N-formimidoyl-L-glutamate from L-histidine: step 1/3. This Ruegeria pomeroyi (strain ATCC 700808 / DSM 15171 / DSS-3) (Silicibacter pomeroyi) protein is Histidine ammonia-lyase.